We begin with the raw amino-acid sequence, 296 residues long: Malate--CoA ligase subunit alpha (296 aa).

CoA-binding positions include 17–20 (TGDK), Lys43, and 96–98 (ITD). The active-site Tele-phosphohistidine intermediate is His251.

Belongs to the succinate/malate CoA ligase alpha subunit family. As to quaternary structure, heterotetramer of two alpha and two beta subunits.

It catalyses the reaction (S)-malate + ATP + CoA = (S)-malyl-CoA + ADP + phosphate. It participates in one-carbon metabolism; formaldehyde assimilation via serine pathway. The chain is Malate--CoA ligase subunit alpha (mtkB) from Methylorubrum extorquens (strain ATCC 14718 / DSM 1338 / JCM 2805 / NCIMB 9133 / AM1) (Methylobacterium extorquens).